The chain runs to 358 residues: Putative UDP-kanosamine synthase oxidoreductase subunit (358 aa).

In terms of assembly, interacts with RifK.

The catalysed reaction is UDP-alpha-D-glucose + NAD(+) = UDP-3-oxo-alpha-D-glucose + NADH + H(+). The protein operates within antibiotic biosynthesis; rifamycin B biosynthesis. In terms of biological role, in a complex with RifK, RifL may catalyze the oxidation of UDP-glucose to UDP-3-keto-D-glucose, which would then be used by RifK to produce UDP-kanosamine. Is not able to use dTDP-glucose as substrate. The sequence is that of Putative UDP-kanosamine synthase oxidoreductase subunit (rifL) from Amycolatopsis mediterranei (strain S699) (Nocardia mediterranei).